Reading from the N-terminus, the 603-residue chain is Methylenetetrahydrofolate reductase 1 (603 aa).

The active-site Proton donor/acceptor is the glutamate 21. NAD(+) contacts are provided by residues 21 to 26 (EFFPPK) and 53 to 54 (TW). FAD-binding positions include 53-54 (TW), histidine 82, 112-114 (RGD), 130-131 (YA), tyrosine 153, and lysine 173. Substrate is bound at residue aspartate 114. 2 residues coordinate substrate: glutamine 184 and tyrosine 276. A Phosphoserine modification is found at serine 355.

It belongs to the methylenetetrahydrofolate reductase family. Requires FAD as cofactor.

The catalysed reaction is (6S)-5-methyl-5,6,7,8-tetrahydrofolate + NADP(+) = (6R)-5,10-methylene-5,6,7,8-tetrahydrofolate + NADPH + H(+). The enzyme catalyses (6S)-5-methyl-5,6,7,8-tetrahydrofolate + NAD(+) = (6R)-5,10-methylene-5,6,7,8-tetrahydrofolate + NADH + H(+). It functions in the pathway one-carbon metabolism; tetrahydrofolate interconversion. Functionally, major methylenetetrahydrofolate reductase required to generate the methyl groups necessary for methionine synthetase to convert homocysteine to methionine. Performs 80 to 85 percent of the total methylenetetrahydrofolate reductase activity of the cells. This is Methylenetetrahydrofolate reductase 1 (met9) from Schizosaccharomyces pombe (strain 972 / ATCC 24843) (Fission yeast).